A 1182-amino-acid chain; its full sequence is Retrotransposable element SLACS 132 kDa protein (1182 aa).

Disordered regions lie at residues 77 to 97, 163 to 220, 317 to 339, and 418 to 478; these read GERS…PRER, DVLD…STDQ, RRKR…ALRL, and RTAR…STAP. A compositionally biased stretch (acidic residues) spans 163–174; sequence DVLDEEEQDDDL. Residues 420–446 show a composition bias toward basic and acidic residues; sequence ARREQQQQRGKDNQEEEDRQKKEEKSL. A compositionally biased stretch (polar residues) spans 456 to 475; the sequence is SVRQGGQPSSSQPKRLNRWS. Residues 560–790 form the Reverse transcriptase domain; it reads NADVSMEVGR…TGDTGFGTAV (231 aa).

It carries out the reaction DNA(n) + a 2'-deoxyribonucleoside 5'-triphosphate = DNA(n+1) + diphosphate. The sequence is that of Retrotransposable element SLACS 132 kDa protein from Trypanosoma brucei gambiense.